The following is a 353-amino-acid chain: (3aS,4S,5R,7aS)-5-hydroxy-7a-methyl-1-oxo-octahydro-1H-indene-4-carboxyl-CoA dehydrogenase (353 aa).

Residues 22 to 24 (GMG), 171 to 173 (AGG), and 194 to 195 (GT) contribute to the FMN site.

It belongs to the nitronate monooxygenase family.

The catalysed reaction is (3aS,4S,5R,7aS)-5-hydroxy-7a-methyl-1-oxo-octahydro-1H-indene-4-carboxyl-CoA + NAD(+) = (5R,7aS)-5-hydroxy-7a-methyl-1-oxo-2,3,5,6,7,7a-hexahydro-1H-indene-carboxyl-CoA + NADH + H(+). It functions in the pathway steroid metabolism; cholesterol degradation. Functionally, involved in the final steps of cholesterol and steroid degradation. Probably catalyzes the introduction of a double bound into the C ring of 5OH-HIC-CoA, leading to the formation of (5R,7aS)-5-hydroxy-7a-methyl-1-oxo-3,5,6,7-tetrahydro-2H-indene-4-carboxyl-CoA. This chain is (3aS,4S,5R,7aS)-5-hydroxy-7a-methyl-1-oxo-octahydro-1H-indene-4-carboxyl-CoA dehydrogenase, found in Rhodococcus jostii (strain RHA1).